Consider the following 509-residue polypeptide: Fumarate hydratase, mitochondrial (509 aa).

The transit peptide at 1–43 (MYRSARSLHRFSASLSDLRAAQRSIKARNVCPAPGLRHQTVRM) directs the protein to the mitochondrion. Substrate contacts are provided by residues 144–146 (SGT), 175–178 (HPND), 185–187 (SSN), and Thr-233. Catalysis depends on His-234, which acts as the Proton donor/acceptor. The active site involves Ser-364. Residues Ser-365 and 370-372 (KVN) each bind substrate.

The protein belongs to the class-II fumarase/aspartase family. Fumarase subfamily. Homotetramer.

The protein resides in the mitochondrion. Its subcellular location is the cytoplasm. The protein localises to the cytosol. It is found in the nucleus. It localises to the chromosome. The enzyme catalyses (S)-malate = fumarate + H2O. The protein operates within carbohydrate metabolism; tricarboxylic acid cycle; (S)-malate from fumarate: step 1/1. Catalyzes the reversible stereospecific interconversion of fumarate to L-malate. Experiments in other species have demonstrated that specific isoforms of this protein act in defined pathways and favor one direction over the other. Its function is as follows. Catalyzes the hydration of fumarate to L-malate in the tricarboxylic acid (TCA) cycle to facilitate a transition step in the production of energy in the form of NADH. In terms of biological role, catalyzes the dehydration of L-malate to fumarate. Fumarate metabolism in the cytosol plays a role during urea cycle and arginine metabolism; fumarate being a by-product of the urea cycle and amino-acid catabolism. Also plays a role in DNA repair by promoting non-homologous end-joining (NHEJ). In response to DNA damage translocates to the nucleus and accumulates at DNA double-strand breaks (DSBs): acts by catalyzing formation of fumarate. The polypeptide is Fumarate hydratase, mitochondrial (Danio rerio (Zebrafish)).